A 612-amino-acid chain; its full sequence is GPI mannosyltransferase 3 (612 aa).

A run of 2 helical transmembrane segments spans residues 92–112 and 145–165; these read LLAI…AGLM and VIYA…YFTI. Asn-188 carries N-linked (GlcNAc...) asparagine glycosylation. The next 3 membrane-spanning stretches (helical) occupy residues 192 to 212, 254 to 274, and 288 to 308; these read IALL…RTFI, RPSN…NLLL, and ILVV…YFYN. N-linked (GlcNAc...) asparagine glycosylation occurs at Asn-321. The helical transmembrane segment at 339 to 359 threads the bilayer; the sequence is LLQSLPIMLGYSLPLFIYGLF. N-linked (GlcNAc...) asparagine glycosylation occurs at Asn-361. 3 helical membrane-spanning segments follow: residues 371–391, 398–418, and 429–449; these read FGAL…YSYL, FIYP…LKLA, and EYVW…TTFQ. N-linked (GlcNAc...) asparagine glycans are attached at residues Asn-508, Asn-526, and Asn-550.

Belongs to the glycosyltransferase 22 family. PIGB subfamily.

Its subcellular location is the endoplasmic reticulum membrane. It participates in glycolipid biosynthesis; glycosylphosphatidylinositol-anchor biosynthesis. In terms of biological role, mannosyltransferase involved in glycosylphosphatidylinositol-anchor biosynthesis. Transfers the third mannose to Man2-GlcN-acyl-PI during GPI precursor assembly. This chain is GPI mannosyltransferase 3 (GPI10), found in Candida glabrata (strain ATCC 2001 / BCRC 20586 / JCM 3761 / NBRC 0622 / NRRL Y-65 / CBS 138) (Yeast).